We begin with the raw amino-acid sequence, 571 residues long: Phototropic-responsive NPH3 family protein NPY1 (571 aa).

Positions 29-97 (SDVTIHVGEV…CYGMTVTLNA (69 aa)) constitute a BTB domain. Residues 210–468 (DWWVEDVCEL…VQVLYFEQLR (259 aa)) form the NPH3 domain. Residue Tyr409 is modified to Phosphotyrosine. Residues 475 to 571 (ASVAASSHSP…SSRRRRHSIS (97 aa)) are disordered. Basic and acidic residues predominate over residues 484 to 504 (PVEKTEENKGEEATKKVELSK). Low complexity predominate over residues 540–562 (SNKSSEVSSGSSQSPPAKSSSSS).

Belongs to the NPH3 family. Component of a complex made of PINs (e.g. PIN1 and PIN2), MAB4/MELs (e.g. NPY1/MAB4 and NPY5/MEL1) and AGC kinases (e.g. D6PK and PID) at the plasma membrane. Binds directly to PIN2 and PID. Accumulates in organ primordia such as cotyledons, leaves and floral organs. Expressed mainly in the apical regions of embryos including cotyledon tips and the apical meristem. Induced by the transcription factor ARF5/MP at the periphery of inflorescence meristems. Highly expressed in primary root tips and radicles.

It is found in the late endosome. The protein localises to the cell membrane. The protein resides in the cytoplasm. It localises to the cytosol. The protein operates within protein modification; protein ubiquitination. May act as a substrate-specific adapter of an E3 ubiquitin-protein ligase complex (CUL3-RBX1-BTB) which mediates the ubiquitination and subsequent proteasomal degradation of target proteins. Coregulates with PID the auxin-mediated plant organogenesis. Regulates basipetal PIN proteins (e.g. PIN1) polarization to establish inward auxin transport from the L1 surface of incipient organ primordia; this process is essential for the progression of flower organs development. Recruited to the plasma membrane by PINs (e.g. PIN1 and PIN2) and, in concert with AGC kinases-mediated (e.g. D6PK and PID) PINs phosphorylation, maintains their cell polarity (apical or basal) through limiting lateral diffusion-based escape. Induces auxin response in inner cell layers through a shift in PIN1 localization. Influences cotyledon development by regulating auxin distribution mainly in the protodermal cell layer. May play an essential role in root gravitropic responses. This chain is Phototropic-responsive NPH3 family protein NPY1, found in Arabidopsis thaliana (Mouse-ear cress).